The chain runs to 360 residues: 3-dehydroquinate synthase (360 aa).

Residues D71–K76, G105–D109, T129–T130, K142, K151, and T169–T172 each bind NAD(+). Zn(2+)-binding residues include E184, H248, and H265.

Belongs to the sugar phosphate cyclases superfamily. Dehydroquinate synthase family. It depends on Co(2+) as a cofactor. Zn(2+) serves as cofactor. Requires NAD(+) as cofactor.

The protein localises to the cytoplasm. It carries out the reaction 7-phospho-2-dehydro-3-deoxy-D-arabino-heptonate = 3-dehydroquinate + phosphate. Its pathway is metabolic intermediate biosynthesis; chorismate biosynthesis; chorismate from D-erythrose 4-phosphate and phosphoenolpyruvate: step 2/7. Functionally, catalyzes the conversion of 3-deoxy-D-arabino-heptulosonate 7-phosphate (DAHP) to dehydroquinate (DHQ). In Coxiella burnetii (strain CbuK_Q154) (Coxiella burnetii (strain Q154)), this protein is 3-dehydroquinate synthase.